A 222-amino-acid polypeptide reads, in one-letter code: MRFSKSLILITLSALVISFAEANDPSPLQDFCVAIGDLKNGVFVNGKFCKDPKQAKAEDFFYSGLNQAGTTNNKVKSNVTTVNVDQIPGLNTLGISLVRIDYAPYGQNPPHTHPRATEILVLVEGTLYVGFVSSNQDNNRLFAKVLNPGDVFVFPIGMIHFQVNIGKTPAVAFAGLSSQNAGVITIADTVFGSTPPINPDILAQAFQLDVNVVKDLEAKFKN.

Positions 1 to 22 are cleaved as a signal peptide; that stretch reads MRFSKSLILITLSALVISFAEA. The cysteines at positions 32 and 49 are disulfide-linked. Residues 63–214 enclose the Cupin type-1 domain; it reads SGLNQAGTTN…AFQLDVNVVK (152 aa). The N-linked (GlcNAc...) asparagine glycan is linked to asparagine 78. Residues histidine 111, histidine 113, glutamate 118, and histidine 160 each contribute to the Mn(2+) site.

Belongs to the germin family. Oligomer (believed to be a pentamer but probably hexamer).

The protein resides in the secreted. It is found in the extracellular space. It localises to the apoplast. Functionally, may play a role in plant defense. Probably has no oxalate oxidase activity even if the active site is conserved. This is Germin-like protein subfamily 1 member 14 from Arabidopsis thaliana (Mouse-ear cress).